We begin with the raw amino-acid sequence, 185 residues long: Ribosome-recycling factor (185 aa).

Belongs to the RRF family.

Its subcellular location is the cytoplasm. Responsible for the release of ribosomes from messenger RNA at the termination of protein biosynthesis. May increase the efficiency of translation by recycling ribosomes from one round of translation to another. This Novosphingobium aromaticivorans (strain ATCC 700278 / DSM 12444 / CCUG 56034 / CIP 105152 / NBRC 16084 / F199) protein is Ribosome-recycling factor.